A 270-amino-acid chain; its full sequence is Dermonecrotic toxin LhSicTox-alphaIA2aiii (270 aa).

His2 is a catalytic residue. The Mg(2+) site is built by Glu22 and Asp24. Catalysis depends on His38, which acts as the Nucleophile. Intrachain disulfides connect Cys42/Cys48 and Cys44/Cys187. Asp82 contacts Mg(2+).

Belongs to the arthropod phospholipase D family. Class II subfamily. Requires Mg(2+) as cofactor. In terms of tissue distribution, expressed by the venom gland.

It localises to the secreted. It catalyses the reaction an N-(acyl)-sphingosylphosphocholine = an N-(acyl)-sphingosyl-1,3-cyclic phosphate + choline. The enzyme catalyses an N-(acyl)-sphingosylphosphoethanolamine = an N-(acyl)-sphingosyl-1,3-cyclic phosphate + ethanolamine. It carries out the reaction a 1-acyl-sn-glycero-3-phosphocholine = a 1-acyl-sn-glycero-2,3-cyclic phosphate + choline. The catalysed reaction is a 1-acyl-sn-glycero-3-phosphoethanolamine = a 1-acyl-sn-glycero-2,3-cyclic phosphate + ethanolamine. Functionally, dermonecrotic toxins cleave the phosphodiester linkage between the phosphate and headgroup of certain phospholipids (sphingolipid and lysolipid substrates), forming an alcohol (often choline) and a cyclic phosphate. This toxin acts on sphingomyelin (SM). It may also act on ceramide phosphoethanolamine (CPE), lysophosphatidylcholine (LPC) and lysophosphatidylethanolamine (LPE), but not on lysophosphatidylserine (LPS), and lysophosphatidylglycerol (LPG). It acts by transphosphatidylation, releasing exclusively cyclic phosphate products as second products. Induces dermonecrosis, hemolysis, increased vascular permeability, edema, inflammatory response, and platelet aggregation. This is Dermonecrotic toxin LhSicTox-alphaIA2aiii from Loxosceles hirsuta (Recluse spider).